Reading from the N-terminus, the 381-residue chain is Tryptophan--tRNA ligase (381 aa).

Positions Pro-82–His-90 match the 'HIGH' region motif. Positions Lys-254–Ser-258 match the 'KMSKS' region motif.

It belongs to the class-I aminoacyl-tRNA synthetase family.

The protein localises to the cytoplasm. It catalyses the reaction tRNA(Trp) + L-tryptophan + ATP = L-tryptophyl-tRNA(Trp) + AMP + diphosphate + H(+). The polypeptide is Tryptophan--tRNA ligase (Sulfurisphaera tokodaii (strain DSM 16993 / JCM 10545 / NBRC 100140 / 7) (Sulfolobus tokodaii)).